The following is a 363-amino-acid chain: tRNA N6-adenosine threonylcarbamoyltransferase (363 aa).

Histidine 138, histidine 142, and tyrosine 159 together coordinate Fe cation. Substrate is bound by residues 159 to 163, aspartate 191, aspartate 212, and serine 295; that span reads YVSGG. Aspartate 323 contacts Fe cation.

It belongs to the KAE1 / TsaD family. It depends on Fe(2+) as a cofactor.

The protein resides in the cytoplasm. The enzyme catalyses L-threonylcarbamoyladenylate + adenosine(37) in tRNA = N(6)-L-threonylcarbamoyladenosine(37) in tRNA + AMP + H(+). Required for the formation of a threonylcarbamoyl group on adenosine at position 37 (t(6)A37) in tRNAs that read codons beginning with adenine. Is probably involved in the transfer of the threonylcarbamoyl moiety of threonylcarbamoyl-AMP (TC-AMP) to the N6 group of A37. This chain is tRNA N6-adenosine threonylcarbamoyltransferase, found in Hyperthermus butylicus (strain DSM 5456 / JCM 9403 / PLM1-5).